The following is a 170-amino-acid chain: Protein SprT (170 aa).

One can recognise a SprT-like domain in the interval 23-164; it reads QLARQHFSVE…CRQCGDKLKF (142 aa). His-78 lines the Zn(2+) pocket. Glu-79 is a catalytic residue. His-82 lines the Zn(2+) pocket.

This sequence belongs to the SprT family. Zn(2+) is required as a cofactor.

The protein resides in the cytoplasm. This is Protein SprT from Serratia proteamaculans (strain 568).